The primary structure comprises 221 residues: Uracil-DNA glycosylase 1 (221 aa).

The active-site Proton acceptor is Asp61.

This sequence belongs to the uracil-DNA glycosylase (UDG) superfamily. UNG family.

The protein resides in the cytoplasm. It catalyses the reaction Hydrolyzes single-stranded DNA or mismatched double-stranded DNA and polynucleotides, releasing free uracil.. Functionally, excises uracil residues from the DNA which can arise as a result of misincorporation of dUMP residues by DNA polymerase or due to deamination of cytosine. The protein is Uracil-DNA glycosylase 1 of Listeria monocytogenes serovar 1/2a (strain ATCC BAA-679 / EGD-e).